We begin with the raw amino-acid sequence, 109 residues long: DNA-directed RNA polymerase subunit I (109 aa).

It catalyses the reaction RNA(n) + a ribonucleoside 5'-triphosphate = RNA(n+1) + diphosphate. In terms of biological role, DNA-dependent RNA polymerase catalyzes the transcription of DNA into RNA using the four ribonucleoside triphosphates as substrates. The protein is DNA-directed RNA polymerase subunit I (rpoI) of Methanocaldococcus jannaschii (strain ATCC 43067 / DSM 2661 / JAL-1 / JCM 10045 / NBRC 100440) (Methanococcus jannaschii).